The following is a 557-amino-acid chain: Tripeptidyl-peptidase 1 (557 aa).

Positions 1–16 (MRVAVFVLSFIWLVNG) are cleaved as a signal peptide. Residues 17 to 190 (ELLEADQDAV…WEGARQAILG (174 aa)) constitute a propeptide, removed in mature form. The N-linked (GlcNAc...) asparagine glycan is linked to asparagine 53. Cysteine 107 and cysteine 118 are disulfide-bonded. The Peptidase S53 domain occupies 194–557 (GVTPAVIRNR…YPVFLASLMD (364 aa)). Asparagine 205 and asparagine 216 each carry an N-linked (GlcNAc...) asparagine glycan. Residues glutamate 266 and aspartate 270 each act as charge relay system in the active site. Residues asparagine 280, asparagine 307, and asparagine 438 are each glycosylated (N-linked (GlcNAc...) asparagine). Intrachain disulfides connect cysteine 359–cysteine 521 and cysteine 517–cysteine 532. Serine 470 (charge relay system) is an active-site residue. Ca(2+) is bound by residues aspartate 512 and valine 513. Aspartate 538 lines the Ca(2+) pocket.

Ca(2+) serves as cofactor. Activated by autocatalytic proteolytical processing.

It is found in the lysosome. It carries out the reaction Release of an N-terminal tripeptide from a polypeptide, but also has endopeptidase activity.. Lysosomal serine protease with tripeptidyl-peptidase I activity. May act as a non-specific lysosomal peptidase which generates tripeptides from the breakdown products produced by lysosomal proteinases. Requires substrates with an unsubstituted N-terminus. The protein is Tripeptidyl-peptidase 1 of Danio rerio (Zebrafish).